An 887-amino-acid polypeptide reads, in one-letter code: Endoglucanase 1 (887 aa).

A signal peptide spans 1–55 (MRLVNSLGRRKILLILAVIVAFSTVLLFAKLWGRKTSSTLDEVGSKTHGDLTAEN). The disordered stretch occupies residues 40–66 (LDEVGSKTHGDLTAENKNGGYLPEEEI). Positions 43-53 (VGSKTHGDLTA) are enriched in basic and acidic residues. A catalytic region spans residues 56–518 (KNGGYLPEEE…AKMYKLYGGS (463 aa)). Residue Asp131 is the Nucleophile of the active site. The tract at residues 441–460 (ENPPKRPHHRTAHGSWADSQ) is disordered. Catalysis depends on residues His448, Asp486, and Glu495. The region spanning 529 to 684 (VPEDEIFVEA…GVLVFGREPG (156 aa)) is the CBM3 1 domain. The disordered stretch occupies residues 684–730 (GSASKSTSKDNGLSKATPTVKTESQPTAKHTQNPASDFKTPANQNSV). The span at 686 to 729 (ASKSTSKDNGLSKATPTVKTESQPTAKHTQNPASDFKTPANQNS) shows a compositional bias: polar residues. The CBM3 2 domain maps to 736-887 (IKGEVVLQYA…SNKLVYGKEP (152 aa)).

This sequence belongs to the glycosyl hydrolase 9 (cellulase E) family.

It catalyses the reaction Endohydrolysis of (1-&gt;4)-beta-D-glucosidic linkages in cellulose, lichenin and cereal beta-D-glucans.. Its pathway is glycan metabolism; cellulose degradation. In terms of biological role, this enzyme catalyzes the endohydrolysis of 1,4-beta-glucosidic linkages in cellulose, lichenin and cereal beta-D-glucans. Principally active against barley beta-glucan. The polypeptide is Endoglucanase 1 (celI) (Acetivibrio thermocellus (strain ATCC 27405 / DSM 1237 / JCM 9322 / NBRC 103400 / NCIMB 10682 / NRRL B-4536 / VPI 7372) (Clostridium thermocellum)).